A 513-amino-acid polypeptide reads, in one-letter code: Cytochrome P450 monooxygenase asaD (513 aa).

Residues 14 to 34 traverse the membrane as a helical segment; sequence ILYPFLFGIFAVASLCIATLL. N-linked (GlcNAc...) asparagine glycans are attached at residues Asn-258, Asn-370, Asn-431, and Asn-441. Cys-461 contacts heme.

Belongs to the cytochrome P450 family. Requires heme as cofactor.

It localises to the membrane. The protein operates within secondary metabolite biosynthesis. Its function is as follows. Cytochrome P450 monooxygenase; part of the gene cluster that mediates the biosynthesis of aspergillic acid, a hydroxamic acid-containing pyrazinone with aliphatic side chains that originates from leucine (Leu) and isoleucine (Ile). Aspergillic acid has antibiotic properties and was shown to be lethal to mice. The first step in the pathway is the production of deoxyaspergillic acid via a condensation between the Ile amine and the Leu carboxylic acid, followed by a reductive release from the protein forming the dipeptide aldehyde NH(2)-Leu-Ile-CHO, which could undergo an intermolecular cyclization resulting in a dihydropyrazinone. As the NRPS asaC lacks a condensation domain, it is improbable that it is responsible for condensation of Leu and Ile. One possibility is that asaC acts on a previously condensed dipeptide and functions as a Leu-Ile reductase to yield deoxyaspergillic acid. After asaC forms deoxyaspergillic acid, the cytochrome P450 asaD oxidizes the pyrazinone to the hydroxamic acid-containing bioactive metabolite aspergillic acid. The hydroxylase/desaturase asaB can then convert aspergillic acid to hydroxyaspergillic acid. Both aspergillic acid and hydroxyaspergillic acid can form complexes with iron producing ferriaspergillin analogs. In Aspergillus flavus (strain ATCC 200026 / FGSC A1120 / IAM 13836 / NRRL 3357 / JCM 12722 / SRRC 167), this protein is Cytochrome P450 monooxygenase asaD.